The primary structure comprises 589 residues: Enhancer of polycomb-like protein 1 (589 aa).

4 disordered regions span residues 298–339, 403–430, 468–497, and 516–589; these read GDED…RPAE, MTPPASASSGSMDEPTPMDLDKPKPNPP, LPSPARDLSEEQSDRWKYDQSSDDEDDAPV, and LQTV…QPVS. The segment covering 474 to 487 has biased composition (basic and acidic residues); sequence DLSEEQSDRWKYDQ. The span at 557-566 shows a compositional bias: low complexity; that stretch reads PQPNQSQSLP. The span at 567 to 589 shows a compositional bias: pro residues; sequence LPQPQQPVAQPQPQPQPQAQPVS.

It belongs to the enhancer of polycomb family. Component of the NuA4 histone acetyltransferase complex.

It localises to the nucleus. Functionally, component of the NuA4 histone acetyltransferase complex which is involved in transcriptional activation of selected genes principally by acetylation of nucleosomal histone H4 and H2A. The NuA4 complex is also involved in DNA repair. Involved in gene silencing by neighboring heterochromatin, blockage of the silencing spreading along the chromosome, and required for cell cycle progression through G2/M. This is Enhancer of polycomb-like protein 1 (epl-1) from Neurospora crassa (strain ATCC 24698 / 74-OR23-1A / CBS 708.71 / DSM 1257 / FGSC 987).